The chain runs to 150 residues: uncharacterized protein (150 aa).

4 helical membrane-spanning segments follow: residues 32 to 52 (ILYGLIAIFSAMLLTSLAVSL), 64 to 84 (FNWLITAISFLSLFIGGFISG), 94 to 114 (IGALTALSFSLIILLFQYLGF), and 123 to 143 (LIFHLGFLGVCMLGGIFGVNM).

The protein resides in the cell membrane. This is an uncharacterized protein from Bacillus subtilis (strain 168).